The following is an 852-amino-acid chain: DNA polymerase kappa (852 aa).

The 256-residue stretch at isoleucine 102 to glycine 357 folds into the UmuC domain. Mg(2+) contacts are provided by aspartate 106 and aspartate 197. Residues phenylalanine 252–glutamine 273 are disordered. Polar residues predominate over residues proline 261–glutamine 273. 2 UBZ4-type zinc fingers span residues threonine 619–serine 649 and alanine 761–isoleucine 791. Positions 622, 625, 640, 644, 764, 767, 782, and 786 each coordinate Zn(2+). The disordered stretch occupies residues serine 798 to lysine 852. A compositionally biased stretch (basic and acidic residues) spans glutamine 805–glutamine 817. Residues glycine 821–lysine 839 show a composition bias toward basic residues. Residues proline 840–lysine 852 show a composition bias toward basic and acidic residues.

Belongs to the DNA polymerase type-Y family. In terms of assembly, interacts with PCNA. Interacts with REV1. Requires Mg(2+) as cofactor. Mn(2+) is required as a cofactor. Detected at low levels in heart, brain, lung, liver, kidney and testis.

It is found in the nucleus. It catalyses the reaction DNA(n) + a 2'-deoxyribonucleoside 5'-triphosphate = DNA(n+1) + diphosphate. In terms of biological role, DNA polymerase specifically involved in DNA repair. Plays an important role in translesion synthesis, where the normal high-fidelity DNA polymerases cannot proceed and DNA synthesis stalls. Depending on the context, it inserts the correct base, but causes frequent base transitions, transversions and frameshifts. Lacks 3'-5' proofreading exonuclease activity. Forms a Schiff base with 5'-deoxyribose phosphate at abasic sites, but does not have lyase activity. The sequence is that of DNA polymerase kappa (Polk) from Mus musculus (Mouse).